The primary structure comprises 140 residues: Putative nickel-responsive regulator (140 aa).

The Ni(2+) site is built by histidine 81, histidine 92, histidine 94, and cysteine 100.

It belongs to the transcriptional regulatory CopG/NikR family. Ni(2+) is required as a cofactor.

Transcriptional regulator. The polypeptide is Putative nickel-responsive regulator (Methanococcoides burtonii (strain DSM 6242 / NBRC 107633 / OCM 468 / ACE-M)).